The chain runs to 662 residues: Polyunsaturated fatty acid (12S)/(13S)-lipoxygenase, epidermal-type (662 aa).

In terms of domain architecture, PLAT spans 2–114 (VKYKILVATG…TICLTEGTAL (113 aa)). In terms of domain architecture, Lipoxygenase spans 115 to 662 (KVTDDTQNLF…PSLVENSVTI (548 aa)). Residues His360, His365, His540, and Ile662 each contribute to the Fe cation site.

It belongs to the lipoxygenase family. Fe cation serves as cofactor. In terms of tissue distribution, expressed in epidermis.

The protein localises to the cytoplasm. It carries out the reaction (5Z,8Z,11Z,14Z)-eicosatetraenoate + O2 = (12S)-hydroperoxy-(5Z,8Z,10E,14Z)-eicosatetraenoate. The catalysed reaction is 1-O-methyl-(9Z,12Z)-octadecadienoate + O2 = 1-O-methyl-(13S)-hydroperoxy-(9Z,11E)-octadecadienoate. It catalyses the reaction (8Z,11Z,14Z)-eicosatrienoate + O2 = (12S)-hydroperoxy-(8Z,10E,14Z)-eicosatrienoate. The enzyme catalyses (5Z,8Z,11Z)-eicosatrienoate + O2 = (12S)-hydroperoxy-(5Z,8Z,10E)-eicosatrienoate. It carries out the reaction 1-O-methyl-(5Z,8Z,11Z,14Z)-eicosatetraenoate + O2 = 1-O-methyl-(12S)-hydroperoxy-(5Z,8Z,10E,14Z)-eicosatetraenoate. The catalysed reaction is (9Z,12Z)-octadecadienoate + O2 = (13S)-hydroperoxy-(9Z,11E)-octadecadienoate. It catalyses the reaction (4Z,7Z,10Z,13Z,16Z,19Z)-docosahexaenoate + O2 = (14S)-hydroperoxy-(4Z,7Z,10Z,12E,16Z,19Z)-docosahexaenoate. The protein operates within lipid metabolism; hydroperoxy eicosatetraenoic acid biosynthesis. With respect to regulation, arachidonate 12-lipoxygenase activity is decreased when the pH decreases from 7.4 to 6.0. Functionally, catalyzes the regio and stereo-specific incorporation of a single molecule of dioxygen into free and esterified polyunsaturated fatty acids generating lipid hydroperoxides that can be further reduced to the corresponding hydroxy species. Shows increasing catalytic activity within the series arachidonic acid &lt; 5,8,11-eicosatrienoic acid &lt; linoleic acid &lt; 8,11,14-eicosatrienoic acid. This is Polyunsaturated fatty acid (12S)/(13S)-lipoxygenase, epidermal-type from Mus musculus (Mouse).